Reading from the N-terminus, the 359-residue chain is Guanine nucleotide-binding protein G(q) subunit alpha (359 aa).

2 S-palmitoyl cysteine lipidation sites follow: cysteine 9 and cysteine 10. The region spanning 38–359 is the G-alpha domain; that stretch reads RELKLLLLGT…QLNLKEYNLV (322 aa). The segment at 41-54 is G1 motif; sequence KLLLLGTGESGKST. The GTP site is built by serine 50, glycine 51, lysine 52, serine 53, threonine 54, serine 156, leucine 180, arginine 181, and arginine 183. Residue serine 53 coordinates Mg(2+). Positions 178–186 are G2 motif; sequence DVLRVRVPT. Mg(2+) is bound at residue threonine 186. The G3 motif stretch occupies residues 201 to 210; that stretch reads FRMVDVGGQR. Glutamine 209 carries the 5-glutamyl histamine modification. The tract at residues 270 to 277 is G4 motif; that stretch reads ILFLNKKD. Residues asparagine 274, lysine 275, aspartate 277, and alanine 331 each coordinate GTP. Positions 329–334 are G5 motif; sequence TCATDT.

It belongs to the G-alpha family. G(q) subfamily. In terms of assembly, g proteins are composed of 3 units; alpha, beta and gamma. The alpha chain contains the guanine nucleotide binding site. Interacts (GDP-bound form) with RIC8A (via C-terminus); promoting GNAQ folding and association with the plasma membrane. Binds NHERF1. Forms a complex with PECAM1 and BDKRB2. Interacts with GAS2L2. In terms of processing, palmitoylated by ZDHHC3 and ZDHHC7. Palmitoylation occurs in the Golgi and participates in the localization of GNAQ to the plasma membrane. Post-translationally, histaminylated at Gln-209 residues by TGM2.

Its subcellular location is the cell membrane. The protein localises to the golgi apparatus. It is found in the nucleus. It localises to the nucleus membrane. The catalysed reaction is GTP + H2O = GDP + phosphate + H(+). Guanine nucleotide-binding proteins (G proteins) function as transducers downstream of G protein-coupled receptors (GPCRs) in numerous signaling cascades. The alpha chain contains the guanine nucleotide binding site and alternates between an active, GTP-bound state and an inactive, GDP-bound state. Signaling by an activated GPCR promotes GDP release and GTP binding. The alpha subunit has a low GTPase activity that converts bound GTP to GDP, thereby terminating the signal. Both GDP release and GTP hydrolysis are modulated by numerous regulatory proteins. Signaling is mediated via phospholipase C-beta-dependent inositol lipid hydrolysis for signal propagation: activates phospholipase C-beta: following GPCR activation, GNAQ activates PLC-beta (PLCB1, PLCB2, PLCB3 or PLCB4), leading to production of diacylglycerol (DAG) and inositol 1,4,5-trisphosphate (IP3). Required for platelet activation. Regulates B-cell selection and survival and is required to prevent B-cell-dependent autoimmunity. Regulates chemotaxis of BM-derived neutrophils and dendritic cells (in vitro). Transduces FFAR4 signaling in response to long-chain fatty acids (LCFAs). Together with GNA11, required for heart development. This chain is Guanine nucleotide-binding protein G(q) subunit alpha (Gnaq), found in Mus musculus (Mouse).